A 374-amino-acid chain; its full sequence is Chaperone protein DnaJ (374 aa).

Positions 3–67 constitute a J domain; sequence DFYQILGVSR…ETRARYDQFG (65 aa). A disordered region spans residues 99 to 118; it reads GQSSQGGRSQRRGPQQGDDL. Positions 103 to 115 are enriched in low complexity; it reads QGGRSQRRGPQQG. The CR-type zinc-finger motif lies at 132 to 214; it reads GQQREINIPH…CGGNGVKQVR (83 aa). Zn(2+) is bound by residues Cys-145, Cys-148, Cys-162, Cys-165, Cys-188, Cys-191, Cys-202, and Cys-205. CXXCXGXG motif repeat units follow at residues 145–152, 162–169, 188–195, and 202–209; these read CEVCRGTG, CTTCGGSG, CPTCNGVG, and CTSCGGNG.

Belongs to the DnaJ family. In terms of assembly, homodimer. Requires Zn(2+) as cofactor.

It is found in the cytoplasm. In terms of biological role, participates actively in the response to hyperosmotic and heat shock by preventing the aggregation of stress-denatured proteins and by disaggregating proteins, also in an autonomous, DnaK-independent fashion. Unfolded proteins bind initially to DnaJ; upon interaction with the DnaJ-bound protein, DnaK hydrolyzes its bound ATP, resulting in the formation of a stable complex. GrpE releases ADP from DnaK; ATP binding to DnaK triggers the release of the substrate protein, thus completing the reaction cycle. Several rounds of ATP-dependent interactions between DnaJ, DnaK and GrpE are required for fully efficient folding. Also involved, together with DnaK and GrpE, in the DNA replication of plasmids through activation of initiation proteins. The sequence is that of Chaperone protein DnaJ from Prochlorococcus marinus subsp. pastoris (strain CCMP1986 / NIES-2087 / MED4).